A 359-amino-acid chain; its full sequence is MVLRNPGTKGIASALDERSGEIFRRIVESYLESGEPLGSRNLSRLLPVSLSPASVRNVMSDLEDLGLIYSPHVSAGRLPTQLGLRFFVDAFMQVGNLSPEERASIERQVHPGNRDRSVENLLTEASQMLSGMSRGAGLVITTKSDPVLKHVEFIRLAPTKALAVLVGEHDQVENRIIELPAGITSAQLTEAANFVNAHLAGQTIPELRTQLEKVKETVRGELDALSQDLVERGLAIWSGSEGDGQPARLIVRGRANLLEGLEGTDDIERLRMLFDDLEKKDSLIEILNLAESGPGVRIFIGSENKLFSLSGSSLIVAPYRDSDDRIVGAVGVIGPTRLNYSRIVPMVDYTAQLMSRLSR.

It belongs to the HrcA family.

In terms of biological role, negative regulator of class I heat shock genes (grpE-dnaK-dnaJ and groELS operons). Prevents heat-shock induction of these operons. This chain is Heat-inducible transcription repressor HrcA, found in Rhizobium meliloti (strain 1021) (Ensifer meliloti).